Here is a 155-residue protein sequence, read N- to C-terminus: Transcriptional repressor NrdR (155 aa).

The segment at 1–22 (MRCPFCGHDETQVKDSRPSEDG) is disordered. A zinc finger lies at 3–34 (CPFCGHDETQVKDSRPSEDGAAIRRRRLCPQC). The span at 7–22 (GHDETQVKDSRPSEDG) shows a compositional bias: basic and acidic residues. Residues 49-139 (ITILKRSGRR…VYRDFRETQD (91 aa)) enclose the ATP-cone domain.

It belongs to the NrdR family. It depends on Zn(2+) as a cofactor.

Negatively regulates transcription of bacterial ribonucleotide reductase nrd genes and operons by binding to NrdR-boxes. This is Transcriptional repressor NrdR from Phenylobacterium zucineum (strain HLK1).